Here is a 230-residue protein sequence, read N- to C-terminus: UPF0173 metal-dependent hydrolase OEOE_1287 (230 aa).

It belongs to the UPF0173 family.

This is UPF0173 metal-dependent hydrolase OEOE_1287 from Oenococcus oeni (strain ATCC BAA-331 / PSU-1).